We begin with the raw amino-acid sequence, 359 residues long: uncharacterized protein (359 aa).

This is an uncharacterized protein from Archaeoglobus fulgidus (strain ATCC 49558 / DSM 4304 / JCM 9628 / NBRC 100126 / VC-16).